A 124-amino-acid polypeptide reads, in one-letter code: Putative transmembrane protein FLJ36131 (124 aa).

Residues Met1–Tyr2 are Cytoplasmic-facing. Residues Val3–Ile23 traverse the membrane as a helical segment. Residues Val24–Ser124 are Extracellular-facing. Asn41 carries N-linked (GlcNAc...) asparagine glycosylation.

The protein resides in the membrane. This chain is Putative transmembrane protein FLJ36131, found in Homo sapiens (Human).